Consider the following 567-residue polypeptide: Oxygen-dependent choline dehydrogenase (567 aa).

FAD is bound at residue 6–35 (DYIIVGAGSAGNTLATRLTEDEGVTVLLLE). The active-site Proton acceptor is H475.

The protein belongs to the GMC oxidoreductase family. FAD serves as cofactor.

The catalysed reaction is choline + A = betaine aldehyde + AH2. It catalyses the reaction betaine aldehyde + NAD(+) + H2O = glycine betaine + NADH + 2 H(+). The protein operates within amine and polyamine biosynthesis; betaine biosynthesis via choline pathway; betaine aldehyde from choline (cytochrome c reductase route): step 1/1. Functionally, involved in the biosynthesis of the osmoprotectant glycine betaine. Catalyzes the oxidation of choline to betaine aldehyde and betaine aldehyde to glycine betaine at the same rate. The sequence is that of Oxygen-dependent choline dehydrogenase from Pseudomonas fluorescens (strain Pf0-1).